A 310-amino-acid polypeptide reads, in one-letter code: D-alanine--D-alanine ligase (310 aa).

One can recognise an ATP-grasp domain in the interval 104-305 (KRLFHSEGLP…MPQLAERILQ (202 aa)). 135 to 190 (LGDFHGAAFVKPLDSGSSVGISRAVGKDELIRGVAKALSVSHRCMVERAIEGRELT) provides a ligand contact to ATP. Positions 259, 272, and 274 each coordinate Mg(2+).

The protein belongs to the D-alanine--D-alanine ligase family. Requires Mg(2+) as cofactor. Mn(2+) is required as a cofactor.

It localises to the cytoplasm. The enzyme catalyses 2 D-alanine + ATP = D-alanyl-D-alanine + ADP + phosphate + H(+). The protein operates within cell wall biogenesis; peptidoglycan biosynthesis. Its function is as follows. Cell wall formation. This Magnetococcus marinus (strain ATCC BAA-1437 / JCM 17883 / MC-1) protein is D-alanine--D-alanine ligase.